We begin with the raw amino-acid sequence, 226 residues long: Ribose-5-phosphate isomerase A (226 aa).

Residues 33-36, 86-89, and 99-102 contribute to the substrate site; these read TGST, DGAD, and KGGG. The active-site Proton acceptor is the Glu-108. Lys-126 lines the substrate pocket.

It belongs to the ribose 5-phosphate isomerase family. Homodimer.

The enzyme catalyses aldehydo-D-ribose 5-phosphate = D-ribulose 5-phosphate. It participates in carbohydrate degradation; pentose phosphate pathway; D-ribose 5-phosphate from D-ribulose 5-phosphate (non-oxidative stage): step 1/1. Catalyzes the reversible conversion of ribose-5-phosphate to ribulose 5-phosphate. In Bordetella pertussis (strain Tohama I / ATCC BAA-589 / NCTC 13251), this protein is Ribose-5-phosphate isomerase A.